The following is a 303-amino-acid chain: N-acetyl-D-glucosamine kinase (303 aa).

Residues 4-11 (GFDIGGTK) and 133-140 (GVGGGLVL) each bind ATP. Residues H157, C177, C179, and C184 each contribute to the Zn(2+) site.

Belongs to the ROK (NagC/XylR) family. NagK subfamily.

The catalysed reaction is N-acetyl-D-glucosamine + ATP = N-acetyl-D-glucosamine 6-phosphate + ADP + H(+). It functions in the pathway cell wall biogenesis; peptidoglycan recycling. In terms of biological role, catalyzes the phosphorylation of N-acetyl-D-glucosamine (GlcNAc) derived from cell-wall degradation, yielding GlcNAc-6-P. The chain is N-acetyl-D-glucosamine kinase from Citrobacter koseri (strain ATCC BAA-895 / CDC 4225-83 / SGSC4696).